A 385-amino-acid chain; its full sequence is Podocin (385 aa).

The segment covering Met1–Ala27 has biased composition (basic and acidic residues). The tract at residues Met1–Ala64 is disordered. Topologically, residues Met1–Glu104 are cytoplasmic. Cys103 carries S-palmitoyl cysteine lipidation. A helical membrane pass occupies residues Trp105 to Phe125. The Extracellular segment spans residues Cys126–Leu385. A compositionally biased stretch (polar residues) spans Asn357–Lys370. Positions Asn357–Leu385 are disordered. The span at Asn376–Leu385 shows a compositional bias: basic and acidic residues.

The protein belongs to the band 7/mec-2 family. Interacts with nephrin/NPHS1, KIRRL1 and CD2AP. Interacts with DDN.

It localises to the membrane. Its function is as follows. Plays a role in the regulation of glomerular permeability, acting probably as a linker between the plasma membrane and the cytoskeleton. The chain is Podocin (Nphs2) from Mus musculus (Mouse).